Reading from the N-terminus, the 230-residue chain is Claudin-2 (230 aa).

Over 1 to 7 (MASLGVQ) the chain is Cytoplasmic. A helical membrane pass occupies residues 8 to 28 (LVGYILGLLGLLGTSIAMLLP). The Extracellular segment spans residues 29–81 (NWRTSSYVGASIVTAVGFSKGLWMECATHSTGITQCDIYSTLLGLPADIQAAQ). Cysteine 54 and cysteine 64 are oxidised to a cystine. A helical transmembrane segment spans residues 82–102 (AMMVTSSAMSSLACIISVVGM). Residues 103 to 116 (RCTVFCQDSRAKDR) lie on the Cytoplasmic side of the membrane. The helical transmembrane segment at 117-137 (VAVVGGVFFILGGILGFIPVA) threads the bilayer. The Extracellular portion of the chain corresponds to 138–162 (WNLHGILRDFYSPLVPDSMKFEIGE). Residues 163–183 (ALYLGIISALFSLVAGVILCF) form a helical membrane-spanning segment. Over 184-230 (SCSPQGNRTNYYDGYQAQPLATRSSPRSAQQPKAKSEFNSYSLTGYV) the chain is Cytoplasmic. The disordered stretch occupies residues 205–230 (TRSSPRSAQQPKAKSEFNSYSLTGYV). Residue lysine 218 forms a Glycyl lysine isopeptide (Lys-Gly) (interchain with G-Cter in SUMO) linkage. Residues serine 219 and serine 223 each carry the phosphoserine modification. Positions 229 to 230 (YV) are interactions with TJP1, TJP2 and TJP3.

Belongs to the claudin family. In terms of assembly, can form homo- and heteropolymers with other claudins to mediate paracellular barrier and channel functions of tight junctions in response to physiological stimuli. Homopolymers interact with CLDN3, but not CLDN1, homopolymers. Directly interacts with TJP1/ZO-1, TJP2/ZO-2 and TJP3/ZO-3. In terms of processing, the disulfide bond is necessary for pore formation, but is not required for correct protein trafficking. As to expression, expressed in the kidney, liver and intestine, with higher levels in the ileum than in the jejunum. Low levels in the brain. Expressed in colonic epithelium (at protein level). Expressed in the perivenous regions, bile ducts, and gallbladder epithelium (at protein level).

It is found in the cell junction. Its subcellular location is the tight junction. The protein localises to the cell membrane. It carries out the reaction Na(+)(in) = Na(+)(out). The catalysed reaction is K(+)(in) = K(+)(out). The enzyme catalyses Rb(+)(in) = Rb(+)(out). It catalyses the reaction Li(+)(in) = Li(+)(out). It carries out the reaction Cs(+)(in) = Cs(+)(out). The catalysed reaction is Ca(2+)(in) = Ca(2+)(out). The enzyme catalyses methylamine(out) = methylamine(in). It catalyses the reaction choline(out) = choline(in). It carries out the reaction H2O(in) = H2O(out). The channel permeability is down-regulated at acidic pH. In terms of biological role, forms paracellular channels: polymerizes in tight junction strands with cation- and water-selective channels through the strands, conveying epithelial permeability in a process known as paracellular tight junction permeability. In intestinal epithelium, allows for sodium and water fluxes from the peritoneal side to the lumen of the intestine to regulate nutrient absorption and clear enteric pathogens as part of mucosal immune response. In kidney, allows passive sodium and calcium reabsorption across proximal tubules from the lumen back to the bloodstream. In the hepatobiliary tract, allows paracellular water and cation fluxes in the hepatic perivenous areas and biliary epithelium to generate bile flow and maintain osmotic gradients. This Mus musculus (Mouse) protein is Claudin-2.